Reading from the N-terminus, the 176-residue chain is MKIIAKKDLFINDEIRVREVRLVGLDGEQLGIKPLSEAQAIADDANVDLVLIQPQATPPVAKIMNYGKFKFEYQKKQKEQRKKQSVVTVKEVRLSPVIDKGDFETKLRNGRKFLEKGNKVKVSIRFRGRMITHKEIGAKVLAEFAEKTQDIAIIEQRAKMDGRQMFMQLAPIPDKK.

This sequence belongs to the IF-3 family. In terms of assembly, monomer.

It is found in the cytoplasm. IF-3 binds to the 30S ribosomal subunit and shifts the equilibrium between 70S ribosomes and their 50S and 30S subunits in favor of the free subunits, thus enhancing the availability of 30S subunits on which protein synthesis initiation begins. This is Translation initiation factor IF-3 from Streptococcus thermophilus (strain ATCC BAA-491 / LMD-9).